Consider the following 375-residue polypeptide: Homoserine O-succinyltransferase (375 aa).

One can recognise an AB hydrolase-1 domain in the interval 48-358 (NAVLVCHALS…PAGHDSFLLD (311 aa)). Catalysis depends on serine 154, which acts as the Nucleophile. Arginine 224 contacts substrate. Residues aspartate 319 and histidine 352 contribute to the active site. Aspartate 353 provides a ligand contact to substrate.

Belongs to the AB hydrolase superfamily. MetX family. As to quaternary structure, homodimer.

The protein resides in the cytoplasm. The catalysed reaction is L-homoserine + succinyl-CoA = O-succinyl-L-homoserine + CoA. The protein operates within amino-acid biosynthesis; L-methionine biosynthesis via de novo pathway; O-succinyl-L-homoserine from L-homoserine: step 1/1. In terms of biological role, transfers a succinyl group from succinyl-CoA to L-homoserine, forming succinyl-L-homoserine. The sequence is that of Homoserine O-succinyltransferase from Azoarcus sp. (strain BH72).